The chain runs to 478 residues: Adenylosuccinate lyase (478 aa).

Substrate is bound by residues 14-15 (RY), 81-83 (KHD), and 107-108 (TS). His-155 acts as the Proton donor/acceptor in catalysis. Gln-237 is a binding site for substrate. The active-site Proton donor/acceptor is the Ser-285. Arg-299, Arg-325, Ser-330, and Arg-334 together coordinate substrate.

It belongs to the lyase 1 family. Adenylosuccinate lyase subfamily. As to quaternary structure, homotetramer. Residues from neighboring subunits contribute catalytic and substrate-binding residues to each active site.

The enzyme catalyses N(6)-(1,2-dicarboxyethyl)-AMP = fumarate + AMP. It catalyses the reaction (2S)-2-[5-amino-1-(5-phospho-beta-D-ribosyl)imidazole-4-carboxamido]succinate = 5-amino-1-(5-phospho-beta-D-ribosyl)imidazole-4-carboxamide + fumarate. It functions in the pathway purine metabolism; AMP biosynthesis via de novo pathway; AMP from IMP: step 2/2. Its pathway is purine metabolism; IMP biosynthesis via de novo pathway; 5-amino-1-(5-phospho-D-ribosyl)imidazole-4-carboxamide from 5-amino-1-(5-phospho-D-ribosyl)imidazole-4-carboxylate: step 2/2. In terms of biological role, catalyzes two non-sequential steps in de novo AMP synthesis: converts (S)-2-(5-amino-1-(5-phospho-D-ribosyl)imidazole-4-carboxamido)succinate (SAICAR) to fumarate plus 5-amino-1-(5-phospho-D-ribosyl)imidazole-4-carboxamide, and thereby also contributes to de novo IMP synthesis, and converts succinyladenosine monophosphate (SAMP) to AMP and fumarate. This chain is Adenylosuccinate lyase, found in Caenorhabditis briggsae.